We begin with the raw amino-acid sequence, 443 residues long: Glutamyl-tRNA reductase (443 aa).

Substrate is bound by residues 49–52, Ser-109, 114–116, and Gln-120; these read TCNR and EPQ. The active-site Nucleophile is the Cys-50. NADP(+) is bound at residue 189-194; sequence GAGKMC. The tract at residues 421 to 443 is disordered; sequence PDSQQTGGDSVEKDADSKQDLTS. The span at 430–443 shows a compositional bias: basic and acidic residues; the sequence is SVEKDADSKQDLTS.

The protein belongs to the glutamyl-tRNA reductase family. As to quaternary structure, homodimer.

It carries out the reaction (S)-4-amino-5-oxopentanoate + tRNA(Glu) + NADP(+) = L-glutamyl-tRNA(Glu) + NADPH + H(+). It functions in the pathway porphyrin-containing compound metabolism; protoporphyrin-IX biosynthesis; 5-aminolevulinate from L-glutamyl-tRNA(Glu): step 1/2. Its function is as follows. Catalyzes the NADPH-dependent reduction of glutamyl-tRNA(Glu) to glutamate 1-semialdehyde (GSA). The polypeptide is Glutamyl-tRNA reductase (Syntrophotalea carbinolica (strain DSM 2380 / NBRC 103641 / GraBd1) (Pelobacter carbinolicus)).